The chain runs to 177 residues: Large ribosomal subunit protein uL10 (177 aa).

It belongs to the universal ribosomal protein uL10 family. In terms of assembly, part of the ribosomal stalk of the 50S ribosomal subunit. The N-terminus interacts with L11 and the large rRNA to form the base of the stalk. The C-terminus forms an elongated spine to which L12 dimers bind in a sequential fashion forming a multimeric L10(L12)X complex.

Forms part of the ribosomal stalk, playing a central role in the interaction of the ribosome with GTP-bound translation factors. In Mycobacterium leprae (strain Br4923), this protein is Large ribosomal subunit protein uL10.